Here is a 333-residue protein sequence, read N- to C-terminus: Probable G-protein coupled receptor 33 (333 aa).

Topologically, residues 1 to 30 (MDLINSTDYLINASTLVRNSTQFLAPASKM) are extracellular. Residues Asn-5, Asn-12, and Asn-19 are each glycosylated (N-linked (GlcNAc...) asparagine). The chain crosses the membrane as a helical span at residues 31–53 (IIALSLYISSIIGTITNGLYLWV). Topologically, residues 54–64 (LRFKMKQTVNT) are cytoplasmic. The chain crosses the membrane as a helical span at residues 65–86 (LLFFHLILSYFISTMILPFMAT). Topologically, residues 87-103 (SQLQDNHWNFGTALCKV) are extracellular. The cysteines at positions 101 and 179 are disulfide-linked. The helical transmembrane segment at 104–124 (FNGTLSLGMFTSVFFLSAIGL) threads the bilayer. Over 125–143 (DRYLLTLHPVWSQQHRTPR) the chain is Cytoplasmic. A helical membrane pass occupies residues 144 to 165 (WASSIVLGVWISAAALSIPYLI). The Extracellular segment spans residues 166–209 (FRQTHHDRKGKVTCQNNYAVSTNWESKEMQALRQWIHVACFISR). Residues 210–230 (FLLGFLLPFFIIIFCYERVAS) traverse the membrane as a helical segment. Residues 231 to 246 (KVKERSLFKSSKPFKV) lie on the Cytoplasmic side of the membrane. Residues 247–268 (MMTAIISFFVCWMPYHIHQGLL) traverse the membrane as a helical segment. Over 269 to 283 (LTTNQSLLLELTLIL) the chain is Extracellular. Asn-272 carries N-linked (GlcNAc...) asparagine glycosylation. A helical membrane pass occupies residues 284-303 (TVLTTSFNTIFSPTLYLFVG). The Cytoplasmic segment spans residues 304–333 (ENFKKVFKKSILALFESTFSEDSSVERTQT).

This sequence belongs to the G-protein coupled receptor 1 family.

The protein resides in the cell membrane. In terms of biological role, orphan receptor; could be a chemoattractant receptor. The polypeptide is Probable G-protein coupled receptor 33 (GPR33) (Pan troglodytes (Chimpanzee)).